The primary structure comprises 352 residues: Glucose 1-dehydrogenase 1 (352 aa).

Cysteine 35 contributes to the Zn(2+) binding site. Threonine 37 is a substrate binding site. Zn(2+) is bound by residues histidine 60 and glutamate 61. Asparagine 83 contributes to the substrate binding site. The Zn(2+) site is built by cysteine 87, cysteine 90, cysteine 93, and cysteine 101. Residues glutamate 108, glutamine 144, and aspartate 148 each contribute to the substrate site. Glutamine 144 serves as a coordination point for Zn(2+). NADP(+) contacts are provided by residues 182–185 (TGTI), 204–206 (NKR), 264–266 (FGF), 292–294 (LIN), and lysine 341. Residue asparagine 294 coordinates substrate.

It belongs to the zinc-containing alcohol dehydrogenase family. Glucose 1-dehydrogenase subfamily. Zn(2+) serves as cofactor.

The enzyme catalyses D-glucose + NAD(+) = D-glucono-1,5-lactone + NADH + H(+). The catalysed reaction is D-glucose + NADP(+) = D-glucono-1,5-lactone + NADPH + H(+). Functionally, catalyzes the NAD(P)(+)-dependent oxidation of D-glucose to D-gluconate via gluconolactone. Can utilize both NAD(+) and NADP(+) as electron acceptor. Is involved in the degradation of glucose through a non-phosphorylative variant of the Entner-Doudoroff pathway. This is Glucose 1-dehydrogenase 1 from Picrophilus torridus (strain ATCC 700027 / DSM 9790 / JCM 10055 / NBRC 100828 / KAW 2/3).